A 417-amino-acid polypeptide reads, in one-letter code: Alpha-galactosidase (417 aa).

The first 55 residues, 1–55 (MARASSSSSPPSPRLLLLLLVAVAATLLPEAAALGNFTAESRGARWRSRRARRRA), serve as a signal peptide directing secretion. Residues tryptophan 71, aspartate 106, aspartate 107, cysteine 156, lysine 183, aspartate 185, tryptophan 219, arginine 236, and aspartate 240 each coordinate alpha-D-galactose. Intrachain disulfides connect cysteine 76–cysteine 108 and cysteine 156–cysteine 187. Catalysis depends on aspartate 185, which acts as the Nucleophile. Aspartate 240 functions as the Proton donor in the catalytic mechanism.

The protein belongs to the glycosyl hydrolase 27 family.

It carries out the reaction Hydrolysis of terminal, non-reducing alpha-D-galactose residues in alpha-D-galactosides, including galactose oligosaccharides, galactomannans and galactolipids.. The catalysed reaction is melibiose + H2O = D-galactose + D-glucose. The enzyme catalyses raffinose + H2O = sucrose + D-galactose. It catalyses the reaction stachyose + H2O = raffinose + D-galactose. It carries out the reaction alpha-D-Gal-(1-&gt;6)-beta-D-Man-(1-&gt;4)-beta-D-Man-(1-&gt;4)-D-Man + H2O = beta-D-Man-(1-&gt;4)-beta-D-Man-(1-&gt;4)-D-Man + D-galactose. The catalysed reaction is beta-D-Man-(1-&gt;4)-[alpha-D-Gal-(1-&gt;6)]-beta-D-Man-(1-&gt;4)-beta-D-Man-(1-&gt;4)-D-Man + H2O = beta-D-Man-(1-&gt;4)-beta-D-Man-(1-&gt;4)-beta-D-Man-(1-&gt;4)-D-Man + D-galactose. Its activity is regulated as follows. 1 mM Hg(2+) and Ag(2+) decrease activity by 98% and 96%, respectively. 1 mM Para-chloromercuribenzoic acid (PCMB) completely inhibits enzymatic activity. Its function is as follows. Hydrolyzes melibiose, raffinose and stachyose in the following decreasing order of reactivity: raffinose, melibiose, stachyose. Acts on both the terminal alpha-galactosyl residue and the side-chain alpha-galactosyl residue of the galactomanno-oligosaccharides. The sequence is that of Alpha-galactosidase from Oryza sativa subsp. japonica (Rice).